Here is a 163-residue protein sequence, read N- to C-terminus: Outer membrane protein assembly factor BamE (163 aa).

Residues 1-22 (MINKKQSLTLLSAIALSVSLSA) form the signal peptide. The N-palmitoyl cysteine moiety is linked to residue C23. A lipid anchor (S-diacylglycerol cysteine) is attached at C23. The disordered stretch occupies residues 122 to 163 (EQSKLPMVNTTESAPQVPAQRPDEKPLVKENQTEAQVQKPIK). Residues 142-153 (RPDEKPLVKENQ) are compositionally biased toward basic and acidic residues.

The protein belongs to the BamE family. As to quaternary structure, part of the Bam complex.

It localises to the cell outer membrane. Its function is as follows. Part of the outer membrane protein assembly complex, which is involved in assembly and insertion of beta-barrel proteins into the outer membrane. This chain is Outer membrane protein assembly factor BamE, found in Shewanella oneidensis (strain ATCC 700550 / JCM 31522 / CIP 106686 / LMG 19005 / NCIMB 14063 / MR-1).